We begin with the raw amino-acid sequence, 241 residues long: Methylthioribulose-1-phosphate dehydratase (241 aa).

A disordered region spans residues 1–20; that stretch reads MSAIKDERNNDHLVQSHDPE. Cys100 serves as a coordination point for substrate. Zn(2+)-binding residues include His117 and His119. The active-site Proton donor/acceptor is Glu146. Position 202 (His202) interacts with Zn(2+).

This sequence belongs to the aldolase class II family. MtnB subfamily. The cofactor is Zn(2+).

The protein resides in the cytoplasm. It carries out the reaction 5-(methylsulfanyl)-D-ribulose 1-phosphate = 5-methylsulfanyl-2,3-dioxopentyl phosphate + H2O. Its pathway is amino-acid biosynthesis; L-methionine biosynthesis via salvage pathway; L-methionine from S-methyl-5-thio-alpha-D-ribose 1-phosphate: step 2/6. Functionally, catalyzes the dehydration of methylthioribulose-1-phosphate (MTRu-1-P) into 2,3-diketo-5-methylthiopentyl-1-phosphate (DK-MTP-1-P). This Blastomyces gilchristii (strain SLH14081) (Blastomyces dermatitidis) protein is Methylthioribulose-1-phosphate dehydratase.